The following is a 619-amino-acid chain: DNA mismatch repair protein MutL (619 aa).

The protein belongs to the DNA mismatch repair MutL/HexB family.

In terms of biological role, this protein is involved in the repair of mismatches in DNA. It is required for dam-dependent methyl-directed DNA mismatch repair. May act as a 'molecular matchmaker', a protein that promotes the formation of a stable complex between two or more DNA-binding proteins in an ATP-dependent manner without itself being part of a final effector complex. This is DNA mismatch repair protein MutL from Xylella fastidiosa (strain 9a5c).